A 209-amino-acid chain; its full sequence is Mitochondrial import inner membrane translocase subunit Tim23 (209 aa).

The next 3 helical transmembrane spans lie at 73–93 (FELA…FGAV), 125–145 (ALWA…GVII), and 180–200 (GGLA…WEHI).

This sequence belongs to the Tim17/Tim22/Tim23 family. Component of the TIM23 complex at least composed of timm23, timm17 and timm50. The complex interacts with the timm44 component of the PAM complex.

The protein localises to the mitochondrion inner membrane. In terms of biological role, essential component of the TIM23 complex, a complex that mediates the translocation of transit peptide-containing proteins across the mitochondrial inner membrane. This chain is Mitochondrial import inner membrane translocase subunit Tim23 (timm23), found in Xenopus tropicalis (Western clawed frog).